A 209-amino-acid chain; its full sequence is uncharacterized protein (209 aa).

Residues 1–167 (MRNSAGLFMI…LNTYASSNYG (167 aa)) form the Nudix hydrolase domain.

This is an uncharacterized protein from Orgyia pseudotsugata (Douglas-fir tussock moth).